The sequence spans 229 residues: Cytochrome c oxidase subunit 2 (229 aa).

Residues methionine 1–histidine 26 lie on the Mitochondrial intermembrane side of the membrane. A helical transmembrane segment spans residues alanine 27 to asparagine 48. Residues serine 49–glutamate 62 are Mitochondrial matrix-facing. A helical membrane pass occupies residues methionine 63–arginine 82. Over leucine 83 to serine 229 the chain is Mitochondrial intermembrane. Residues histidine 161, cysteine 196, glutamate 198, cysteine 200, histidine 204, and methionine 207 each contribute to the Cu cation site. Glutamate 198 provides a ligand contact to Mg(2+).

This sequence belongs to the cytochrome c oxidase subunit 2 family. Component of the cytochrome c oxidase (complex IV, CIV), a multisubunit enzyme composed of a catalytic core of 3 subunits and several supernumerary subunits. The complex exists as a monomer or a dimer and forms supercomplexes (SCs) in the inner mitochondrial membrane with ubiquinol-cytochrome c oxidoreductase (cytochrome b-c1 complex, complex III, CIII). The cofactor is Cu cation.

The protein resides in the mitochondrion inner membrane. The catalysed reaction is 4 Fe(II)-[cytochrome c] + O2 + 8 H(+)(in) = 4 Fe(III)-[cytochrome c] + 2 H2O + 4 H(+)(out). Component of the cytochrome c oxidase, the last enzyme in the mitochondrial electron transport chain which drives oxidative phosphorylation. The respiratory chain contains 3 multisubunit complexes succinate dehydrogenase (complex II, CII), ubiquinol-cytochrome c oxidoreductase (cytochrome b-c1 complex, complex III, CIII) and cytochrome c oxidase (complex IV, CIV), that cooperate to transfer electrons derived from NADH and succinate to molecular oxygen, creating an electrochemical gradient over the inner membrane that drives transmembrane transport and the ATP synthase. Cytochrome c oxidase is the component of the respiratory chain that catalyzes the reduction of oxygen to water. Electrons originating from reduced cytochrome c in the intermembrane space (IMS) are transferred via the dinuclear copper A center (CU(A)) of subunit 2 and heme A of subunit 1 to the active site in subunit 1, a binuclear center (BNC) formed by heme A3 and copper B (CU(B)). The BNC reduces molecular oxygen to 2 water molecules using 4 electrons from cytochrome c in the IMS and 4 protons from the mitochondrial matrix. The sequence is that of Cytochrome c oxidase subunit 2 (mt:CoII) from Drosophila bifasciata (Fruit fly).